Reading from the N-terminus, the 259-residue chain is Glandular kallikrein-10 (259 aa).

Residues 1 to 18 (MWFLILFLALSLGGIDAA) form the signal peptide. The propeptide at 19–24 (PPGQSR) is activation peptide. The 232-residue stretch at 25 to 256 (IVGGYKCEKN…FTSWIKEVMK (232 aa)) folds into the Peptidase S1 domain. Intrachain disulfides connect Cys-31–Cys-171, Cys-48–Cys-64, Cys-150–Cys-217, Cys-182–Cys-196, and Cys-207–Cys-232. His-63 acts as the Charge relay system in catalysis. N-linked (GlcNAc...) asparagine glycosylation is found at Asn-91 and Asn-106. The Charge relay system role is filled by Asp-118. Ser-211 acts as the Charge relay system in catalysis.

This sequence belongs to the peptidase S1 family. Kallikrein subfamily. As to quaternary structure, heterodimer of a light chain and heavy chain linked by a disulfide bond. Post-translationally, probably N- and O-glycosylated. Kidney and submandibular gland, where it is found in the granular convoluted tubule and striated duct cells. It is likely that the enzyme is mainly synthesized in the granular convoluted tubules and then transferred to other tissues by release into the vasculature or interstitial space.

It catalyses the reaction Preferential cleavage of Arg-|-Xaa bonds in small molecule substrates. Highly selective action to release kallidin (lysyl-bradykinin) from kininogen involves hydrolysis of Met-|-Xaa or Leu-|-Xaa.. In terms of biological role, glandular kallikreins cleave Met-Lys and Arg-Ser bonds in kininogen to release Lys-bradykinin. This protein may be involved in the regulation of renal function. This chain is Glandular kallikrein-10 (Klk10), found in Rattus norvegicus (Rat).